We begin with the raw amino-acid sequence, 208 residues long: Octanoyltransferase (208 aa).

The BPL/LPL catalytic domain maps to 30 to 208 (GTASEAVFIL…ILKQEFYKIF (179 aa)). Substrate is bound by residues 69–76 (RGGKFTYH), 142–144 (SIG), and 155–157 (GVA). The Acyl-thioester intermediate role is filled by C173.

This sequence belongs to the LipB family.

It localises to the cytoplasm. The enzyme catalyses octanoyl-[ACP] + L-lysyl-[protein] = N(6)-octanoyl-L-lysyl-[protein] + holo-[ACP] + H(+). It participates in protein modification; protein lipoylation via endogenous pathway; protein N(6)-(lipoyl)lysine from octanoyl-[acyl-carrier-protein]: step 1/2. Catalyzes the transfer of endogenously produced octanoic acid from octanoyl-acyl-carrier-protein onto the lipoyl domains of lipoate-dependent enzymes. Lipoyl-ACP can also act as a substrate although octanoyl-ACP is likely to be the physiological substrate. The protein is Octanoyltransferase of Orientia tsutsugamushi (strain Boryong) (Rickettsia tsutsugamushi).